The chain runs to 211 residues: Hypoxanthine-guanine phosphoribosyltransferase (211 aa).

A disordered region spans residues 1–20; that stretch reads MSNSAKSPSGPVGDEGRRNY. Residues lysine 66, 125 to 133, lysine 157, and aspartate 185 contribute to the GMP site; that span reads EDIVDSAIT. The Proton acceptor role is filled by aspartate 129. Mg(2+) is bound at residue aspartate 185.

This sequence belongs to the purine/pyrimidine phosphoribosyltransferase family. It depends on Mg(2+) as a cofactor.

It localises to the cytoplasm. It catalyses the reaction IMP + diphosphate = hypoxanthine + 5-phospho-alpha-D-ribose 1-diphosphate. It carries out the reaction GMP + diphosphate = guanine + 5-phospho-alpha-D-ribose 1-diphosphate. It functions in the pathway purine metabolism; IMP biosynthesis via salvage pathway; IMP from hypoxanthine: step 1/1. In terms of biological role, converts guanine to guanosine monophosphate, and hypoxanthine to inosine monophosphate. Transfers the 5-phosphoribosyl group from 5-phosphoribosylpyrophosphate onto the purine. Plays a central role in the generation of purine nucleotides through the purine salvage pathway. The sequence is that of Hypoxanthine-guanine phosphoribosyltransferase from Leishmania donovani.